A 402-amino-acid chain; its full sequence is S-adenosylmethionine synthase (402 aa).

Residue 140-145 participates in ATP binding; sequence GNGSID.

It belongs to the AdoMet synthase 2 family. Mg(2+) is required as a cofactor.

It catalyses the reaction L-methionine + ATP + H2O = S-adenosyl-L-methionine + phosphate + diphosphate. It participates in amino-acid biosynthesis; S-adenosyl-L-methionine biosynthesis; S-adenosyl-L-methionine from L-methionine: step 1/1. In terms of biological role, catalyzes the formation of S-adenosylmethionine from methionine and ATP. In Picrophilus torridus (strain ATCC 700027 / DSM 9790 / JCM 10055 / NBRC 100828 / KAW 2/3), this protein is S-adenosylmethionine synthase.